Consider the following 402-residue polypeptide: Arabinosyltransferase RRA1 (402 aa).

Residues 1–13 (MAVRKEKVQPFRE) are Cytoplasmic-facing. A helical; Signal-anchor for type II membrane protein membrane pass occupies residues 14–34 (CGIAIAVLVGIFIGCVCTILI). The Lumenal portion of the chain corresponds to 35 to 402 (PNDFVNFRSS…DALDRFRDGS (368 aa)). The DXD motif signature appears at 225–227 (DVD). An N-linked (GlcNAc...) asparagine glycan is attached at Asn-253.

Belongs to the glycosyltransferase 77 family. As to expression, expressed in leaf meristem and at points of cauline leaf attachments on the primary stem. Expressed at low levels in siliques.

It is found in the golgi apparatus membrane. Functionally, plays a role in the arabinosylation of cell wall components. Involved in the arabinosylation of extensin proteins in root hair cells. Extensins are structural glycoproteins present in cell walls and its arabinosylation is important for root hair cell development. The chain is Arabinosyltransferase RRA1 from Arabidopsis thaliana (Mouse-ear cress).